A 1056-amino-acid chain; its full sequence is E3 SUMO-protein ligase ZNF451 (1056 aa).

The segment at 1 to 39 is disordered; that stretch reads MGDPGPEIIESVPPAGPEASESTTDENEDDIQFVSEGPL. Residues 1 to 246 form a sufficient for E3 SUMO-protein ligase activity region; the sequence is MGDPGPEIIE…AADGHSNSLL (246 aa). Positions 1-344 are important for interaction with SUMO1 and SUMO2; the sequence is MGDPGPEIIE…RVRCQNAGPV (344 aa). An interaction with SUMO2 1 region spans residues 30-37; the sequence is DIQFVSEG. The PLRP signature appears at 38–41; the sequence is PLRP. Residues 42 to 50 are interaction with SUMO2 2; the sequence is VLEYIDLVS. Residues Lys75, Lys77, Lys106, Lys139, and Lys153 each participate in a glycyl lysine isopeptide (Lys-Gly) (interchain with G-Cter in SUMO2) cross-link. Position 155 is a phosphoserine (Ser155). Omega-N-methylarginine is present on Arg158. A Glycyl lysine isopeptide (Lys-Gly) (interchain with G-Cter in SUMO2) cross-link involves residue Lys167. The segment at 168–521 is important for interaction with SMAD4; sequence PILCPIMHCN…HMSRFHGGAH (354 aa). The segment at 169-195 adopts a C2H2-type 1 zinc-finger fold; the sequence is ILCPIMHCNKEFDNGHLLLGHLKRFDH. The C2H2-type 2; degenerate zinc-finger motif lies at 212–234; the sequence is FACAVCYEHFVTQQQYKDHLLSR. A C2H2-type 3 zinc finger spans residues 253-277; sequence YACPQCFLLFSTKDECLKHMSTKNH. Residues Lys270, Lys275, Lys283, Lys288, Lys301, and Lys309 each participate in a glycyl lysine isopeptide (Lys-Gly) (interchain with G-Cter in SUMO2) cross-link. The segment at 315–338 adopts a C2H2-type 4; atypical zinc-finger fold; the sequence is VKCVACHQTLRSHMELTAHFRVRC. The C2H2-type 5 zinc finger occupies 362 to 385; sequence GYCSDCNQVFMDVASTQSHKNSGH. Lys420 is covalently cross-linked (Glycyl lysine isopeptide (Lys-Gly) (interchain with G-Cter in SUMO2)). Phosphoserine is present on Ser429. A Glycyl lysine isopeptide (Lys-Gly) (interchain with G-Cter in SUMO2) cross-link involves residue Lys431. C2H2-type zinc fingers lie at residues 494-517 and 527-550; these read YKCVVCGKVCEDSGVMRLHMSRFH and FWCRTCKKELVKKDAIMAHITEFH. Residues Lys539 and Lys583 each participate in a glycyl lysine isopeptide (Lys-Gly) (interchain with G-Cter in SUMO2) cross-link. Residues 604–629 form a C2H2-type 8; atypical zinc finger; the sequence is WQCRICEDMFESQECVKQHCMSLTSH. 2 C2H2-type zinc fingers span residues 634–657 and 665–688; these read YSCAHCRKTFHKVETLYRHCQDEH and YFCGLCDLIFNKEEEFLSHYKEHH. Residue Lys645 forms a Glycyl lysine isopeptide (Lys-Gly) (interchain with G-Cter in SUMO2) linkage. Lys704 is covalently cross-linked (Glycyl lysine isopeptide (Lys-Gly) (interchain with G-Cter in SUMO1); alternate). Residue Lys704 forms a Glycyl lysine isopeptide (Lys-Gly) (interchain with G-Cter in SUMO2); alternate linkage. Glycyl lysine isopeptide (Lys-Gly) (interchain with G-Cter in SUMO2) cross-links involve residues Lys729 and Lys746. 2 C2H2-type zinc fingers span residues 751–774 and 787–810; these read FRCSSCSATAQNVTDINTHVCQVH and IKCGICTKAFQNTESAQQHFHRKH. Residues Lys788, Lys815, Lys843, Lys849, Lys947, Lys988, and Lys989 each participate in a glycyl lysine isopeptide (Lys-Gly) (interchain with G-Cter in SUMO2) cross-link. 2 disordered regions span residues 806 to 830 and 839 to 858; these read FHRKHAALQKPTATPGGANRSSTCQ and EKNLKQPSSQKHSDVEKGAE. Over residues 849–858 the composition is skewed to basic and acidic residues; it reads KHSDVEKGAE. The disordered stretch occupies residues 1019-1045; that stretch reads KECDSDDSSGMKGSPAEELRATEDVEL. The span at 1033 to 1045 shows a compositional bias: basic and acidic residues; the sequence is PAEELRATEDVEL. The important for ubiquitin binding stretch occupies residues 1045–1056; the sequence is LEEAIRRSLEEM.

It belongs to the krueppel C2H2-type zinc-finger protein family. In terms of assembly, homooligomer. Interacts (via N-terminal region) with SUMO1. Interacts (via N-terminal region) with SUMO2. Interacts simultaneously with two SUMO2 chains. Identified in a complex with SUMO2 and UBE2I/UBC9, where one ZNF451 interacts with one UBE2I/UBC9 and two SUMO2 chains, one bound to the UBE2I/UBC9 active site and the other to another region of the same UBE2I/UBC9 molecule. Interacts (via C-terminus) with ubiquitin. Interacts (via N-terminal zinc-finger domains) with SMAD4 (via MH2 domain). Interacts with SMAD2 and SMAD3. Identified in a complex that contains at least ZNF451, SMAD2, SMAD3 and SMAD4. Interacts with EP300. Inhibits interaction between EP300 and the SMAD4 complex. Interacts with SIMC1. Sumoylated. Predominantly sumoylated on the N-terminal region that is important for interaction with SUMO1 and SUMO2. Sumoylation is important for localization in nuclear granules; desumoylation leads to diffuse nucleoplasmic location. Autosumoylated (in vitro). Sumoylation enhances E3 SUMO-protein ligase activity.

Its subcellular location is the nucleus. It is found in the PML body. It localises to the nucleoplasm. It functions in the pathway protein modification; protein sumoylation. In terms of biological role, E3 SUMO-protein ligase; has a preference for SUMO2 and SUMO3 and facilitates UBE2I/UBC9-mediated sumoylation of target proteins. Plays a role in protein SUMO2 modification in response to stress caused by DNA damage and by proteasome inhibitors (in vitro). Required for MCM4 sumoylation. Has no activity with SUMO1. Preferentially transfers an additional SUMO2 chain onto the SUMO2 consensus site 'Lys-11'. Negatively regulates transcriptional activation mediated by the SMAD4 complex in response to TGF-beta signaling. Inhibits EP300-mediated acetylation of histone H3 at 'Lys-9'. Plays a role in regulating the transcription of AR targets. The chain is E3 SUMO-protein ligase ZNF451 (Znf451) from Mus musculus (Mouse).